Consider the following 327-residue polypeptide: Aquaporin-1 (327 aa).

Residues 1–34 (MSSNDSNDTDKQHTRLDPTGVDDAYIPPEQPETK) form a disordered region. Residues 1–48 (MSSNDSNDTDKQHTRLDPTGVDDAYIPPEQPETKHHRFKISRDTLRNH) lie on the Cytoplasmic side of the membrane. Residues 49–69 (FIAAVGEFCGTFMFLWCAYVI) traverse the membrane as a helical segment. The Extracellular segment spans residues 70–91 (CNVANHDVALVAAPDGSHPGQL). Residues 92–112 (IMIAIGFGFSVMFSIWCFAGV) form a helical membrane-spanning segment. Residues 113 to 136 (SGGALNPAVSLSLCLARAVSPTRC) are Cytoplasmic-facing. The NPA 1 motif lies at 118-120 (NPA). Residues 137-157 (VVMWVSQIVAGMAAGGAASAM) form a helical membrane-spanning segment. Residues 158–176 (TPGEVLFANSLGLGCSRTR) are Extracellular-facing. The helical transmembrane segment at 177-197 (GLFLEMFGTAILCLTVLMTAV) threads the bilayer. Residues 198–203 (EKRETN) lie on the Cytoplasmic side of the membrane. Residues 204-224 (FMAALPIGISLFIAHVALTAY) form a helical membrane-spanning segment. The Extracellular segment spans residues 225–248 (TGTGVNPARSLGAAVAARYFPHYH). The NPA 2 signature appears at 230-232 (NPA). Residues 249-269 (WIYWIGPLLGSILAWSVWQLL) form a helical membrane-spanning segment. Residues 270-327 (QILDYTTYVTAEKAASTKEKAQKKVKPAVPLLWLKSNFPLLFFISRSLALNVIIFGKN) are Cytoplasmic-facing.

Belongs to the MIP/aquaporin (TC 1.A.8) family.

It is found in the endoplasmic reticulum membrane. The protein resides in the cell membrane. Water channel required to facilitate the transport of water across membranes. Involved in sporulation, freeze tolerance and osmotolerance. Is non-functional in most laboratory strains. This Saccharomyces cerevisiae (Baker's yeast) protein is Aquaporin-1 (AQY1).